A 307-amino-acid polypeptide reads, in one-letter code: Nucleotide-binding protein Arth_2083 (307 aa).

30 to 37 serves as a coordination point for ATP; it reads GMSGAGRS. 81–84 contributes to the GTP binding site; the sequence is DVRS.

Belongs to the RapZ-like family.

Its function is as follows. Displays ATPase and GTPase activities. The protein is Nucleotide-binding protein Arth_2083 of Arthrobacter sp. (strain FB24).